The primary structure comprises 448 residues: Probable glycine dehydrogenase (decarboxylating) subunit 1 (448 aa).

This sequence belongs to the GcvP family. N-terminal subunit subfamily. The glycine cleavage system is composed of four proteins: P, T, L and H. In this organism, the P 'protein' is a heterodimer of two subunits.

It catalyses the reaction N(6)-[(R)-lipoyl]-L-lysyl-[glycine-cleavage complex H protein] + glycine + H(+) = N(6)-[(R)-S(8)-aminomethyldihydrolipoyl]-L-lysyl-[glycine-cleavage complex H protein] + CO2. Its function is as follows. The glycine cleavage system catalyzes the degradation of glycine. The P protein binds the alpha-amino group of glycine through its pyridoxal phosphate cofactor; CO(2) is released and the remaining methylamine moiety is then transferred to the lipoamide cofactor of the H protein. This chain is Probable glycine dehydrogenase (decarboxylating) subunit 1, found in Staphylococcus aureus (strain USA300).